The sequence spans 335 residues: NAC domain-containing protein 87 (335 aa).

Positions 21–172 (LPPGFRFHPT…EWVVCRVFHK (152 aa)) constitute an NAC domain. A DNA-binding region spans residues 119–178 (VGMKKTLVFYRGRAPKGEKTNWVMHEYRLEGKYSYYNLPKSARDEWVVCRVFHKNNPSTT).

The protein resides in the nucleus. Binds to the promoter regions of genes involved in chlorophyll catabolic processes, such as NYC1, SGR1, SGR2 and PAO. The polypeptide is NAC domain-containing protein 87 (Arabidopsis thaliana (Mouse-ear cress)).